The following is a 470-amino-acid chain: Protein ASPARTIC PROTEASE IN GUARD CELL 2 (470 aa).

The signal sequence occupies residues 1–19 (MLLPLFFFFLHLHLHLSSS). Residues 131–466 (YFVRIGVGSP…DGANGFVGFG (336 aa)) enclose the Peptidase A1 domain. Asp-149 is an active-site residue. 6 disulfide bridges follow: Cys-159–Cys-162, Cys-165–Cys-239, Cys-186–Cys-204, Cys-191–Cys-199, Cys-278–Cys-470, and Cys-389–Cys-431. Asp-350 is an active-site residue.

It belongs to the peptidase A1 family.

In terms of biological role, aspartic protease that may be involved in drought avoidance through abscisic acid signaling. The polypeptide is Protein ASPARTIC PROTEASE IN GUARD CELL 2 (ASPG2) (Arabidopsis thaliana (Mouse-ear cress)).